The following is a 241-amino-acid chain: Octanoyltransferase (241 aa).

A BPL/LPL catalytic domain is found at 50 to 238 (KIAHEQVWLL…AFEQIFGPTI (189 aa)). Substrate-binding positions include 89–96 (RGGEFTYH), 169–171 (AIG), and 182–184 (GIS). The active-site Acyl-thioester intermediate is the C200.

It belongs to the LipB family.

The protein localises to the cytoplasm. The enzyme catalyses octanoyl-[ACP] + L-lysyl-[protein] = N(6)-octanoyl-L-lysyl-[protein] + holo-[ACP] + H(+). It participates in protein modification; protein lipoylation via endogenous pathway; protein N(6)-(lipoyl)lysine from octanoyl-[acyl-carrier-protein]: step 1/2. Catalyzes the transfer of endogenously produced octanoic acid from octanoyl-acyl-carrier-protein onto the lipoyl domains of lipoate-dependent enzymes. Lipoyl-ACP can also act as a substrate although octanoyl-ACP is likely to be the physiological substrate. This chain is Octanoyltransferase, found in Bartonella bacilliformis (strain ATCC 35685 / KC583 / Herrer 020/F12,63).